A 244-amino-acid chain; its full sequence is 6-carboxyhexanoate--CoA ligase (244 aa).

This sequence belongs to the BioW family. Homodimer. Mg(2+) serves as cofactor.

It carries out the reaction heptanedioate + ATP + CoA = 6-carboxyhexanoyl-CoA + AMP + diphosphate. It participates in metabolic intermediate metabolism; pimeloyl-CoA biosynthesis; pimeloyl-CoA from pimelate: step 1/1. Catalyzes the transformation of pimelate into pimeloyl-CoA with concomitant hydrolysis of ATP to AMP. The chain is 6-carboxyhexanoate--CoA ligase from Methanococcus maripaludis (strain C6 / ATCC BAA-1332).